Reading from the N-terminus, the 208-residue chain is Sec-independent protein translocase protein TatB (208 aa).

Residues 1–21 traverse the membrane as a helical segment; the sequence is MFDIGVGELTLIAVVALVVLG. Positions 188-208 are disordered; that stretch reads DAGTPAASMPSAPAKIQEKQP.

The protein belongs to the TatB family. As to quaternary structure, the Tat system comprises two distinct complexes: a TatABC complex, containing multiple copies of TatA, TatB and TatC subunits, and a separate TatA complex, containing only TatA subunits. Substrates initially bind to the TatABC complex, which probably triggers association of the separate TatA complex to form the active translocon.

The protein resides in the cell inner membrane. In terms of biological role, part of the twin-arginine translocation (Tat) system that transports large folded proteins containing a characteristic twin-arginine motif in their signal peptide across membranes. Together with TatC, TatB is part of a receptor directly interacting with Tat signal peptides. TatB may form an oligomeric binding site that transiently accommodates folded Tat precursor proteins before their translocation. This Xanthomonas axonopodis pv. citri (strain 306) protein is Sec-independent protein translocase protein TatB.